A 219-amino-acid chain; its full sequence is Endonuclease III (219 aa).

The HhH domain maps to 109–128 (RDELVKLPGVGRKTANVVVS). Cysteine 189, cysteine 196, cysteine 199, and cysteine 205 together coordinate [4Fe-4S] cluster.

This sequence belongs to the Nth/MutY family. [4Fe-4S] cluster serves as cofactor.

The enzyme catalyses 2'-deoxyribonucleotide-(2'-deoxyribose 5'-phosphate)-2'-deoxyribonucleotide-DNA = a 3'-end 2'-deoxyribonucleotide-(2,3-dehydro-2,3-deoxyribose 5'-phosphate)-DNA + a 5'-end 5'-phospho-2'-deoxyribonucleoside-DNA + H(+). In terms of biological role, DNA repair enzyme that has both DNA N-glycosylase activity and AP-lyase activity. The DNA N-glycosylase activity releases various damaged pyrimidines from DNA by cleaving the N-glycosidic bond, leaving an AP (apurinic/apyrimidinic) site. The AP-lyase activity cleaves the phosphodiester bond 3' to the AP site by a beta-elimination, leaving a 3'-terminal unsaturated sugar and a product with a terminal 5'-phosphate. This is Endonuclease III from Bacillus subtilis (strain 168).